The chain runs to 449 residues: MGKEKQHVSIVVIGHVDSGKSTTTGHLIYKCGGIEKRAIEKFEKEAAEMGKGSFKYAWVLDKLKAERERGITIDIALWKFETEKYSFTIIDAPGHRDFIKNMITGTSQADLAILVIASPPGEFEAGISQNGQTREHALLAYTLGVKQMIVACNKMDDKNVNWSQDRYEEVSKEMDLYLKKVGYNPAKVPKVPTSGWTGENLFERTDKTHALGKWYKGPCLLEALDNCDPPKRPVDKPLRLPLQDVYKIGGIGTVPVGRVETGLIKPGMVVTFAPSGLSTEVKSVEMHHEALPQAGPGDNVGFNVKNVSVKDLKRGYVCGDSKNDPPKGCASFNAQVIILNHPGEIHAGYAPVLDCHTAHIACKFSELILKMDRRSGKKLEDTPKMIKSGDAAMVKMVASKPMCVEAFTQYPPLGRFAVRDMRQTVAVGVIKSVEKKEVEGKMTKSAAKK.

In terms of domain architecture, tr-type G spans 5–234; it reads KQHVSIVVIG…DNCDPPKRPV (230 aa). Residues 14–21 form a G1 region; sequence GHVDSGKS. A GTP-binding site is contributed by 14–21; sequence GHVDSGKS. The residue at position 55 (Lys55) is an N6,N6-dimethyllysine. The G2 stretch occupies residues 70-74; it reads GITID. The residue at position 79 (Lys79) is an N6,N6,N6-trimethyllysine. A G3 region spans residues 91–94; sequence DAPG. GTP is bound by residues 91-95 and 153-156; these read DAPGH and NKMD. The segment at 153-156 is G4; it reads NKMD. An N6,N6,N6-trimethyllysine modification is found at Lys187. Residues 194–196 form a G5 region; the sequence is SGW. The residue at position 265 (Lys265) is an N6-methyllysine. Lys310 and Lys400 each carry N6,N6,N6-trimethyllysine.

This sequence belongs to the TRAFAC class translation factor GTPase superfamily. Classic translation factor GTPase family. EF-Tu/EF-1A subfamily.

Its subcellular location is the cytoplasm. This protein promotes the GTP-dependent binding of aminoacyl-tRNA to the A-site of ribosomes during protein biosynthesis. In Pyropia yezoensis (Susabi-nori), this protein is Elongation factor 1-alpha.